The chain runs to 111 residues: Cryptic phage CTXphi transcriptional repressor RstR (111 aa).

Residues 6-60 (IRDLRVERDLNQEEVANGIGVGKNTYLAYEKGTQSPKLETVEKLAKFYGVPIAEL) enclose the HTH cro/C1-type domain. The H-T-H motif DNA-binding region spans 17 to 36 (QEEVANGIGVGKNTYLAYEK).

In terms of biological role, transcriptional repressor of the integrated CTXPhi phage gene rstA2. The polypeptide is Cryptic phage CTXphi transcriptional repressor RstR (rstR) (Vibrio cholerae).